The chain runs to 130 residues: Small ribosomal subunit protein uS8 (130 aa).

It belongs to the universal ribosomal protein uS8 family. As to quaternary structure, part of the 30S ribosomal subunit. Contacts proteins S5 and S12.

Functionally, one of the primary rRNA binding proteins, it binds directly to 16S rRNA central domain where it helps coordinate assembly of the platform of the 30S subunit. This chain is Small ribosomal subunit protein uS8, found in Shewanella halifaxensis (strain HAW-EB4).